The following is a 2542-amino-acid chain: MNVSDGGRRRFEDNEHTLRIYPGTISEGTIYCPIPARKNSTAAEVIDSLINRLHLDKTKCYVLAEVKEFGGEEWILNPTDCPVQRMMLWPRMALENRLSGEDYRFLLREKNLDGSIHYGSLQSWLRVTEERRRMMERGFLPQPQQKDFDDLCSLPDLNEKTLLENLRNRFKHEKIYTYVGSILIAINPFKFLPIYNPKYVKMYDNHQLGKLEPHIYAVADVAYHAMLQRKKNQCIVISGESGSGKTQSTNFLIHHLTALSQKGFASGVEQIILGAGPVLEAFGNAKTAHNNNSSRFGKFIQVNYQETGTVLGAYVEKYLLEKSRLVYQEHNERNYHVFYYLLAGASEEERLAFHLKQPEEYHFLNQITKKPLRQSWDDYCYDSEPDCFTVEGEDLRHDFERLQLAMEMVGFLPKTRRQIFSLLSAILHLGNISYKKKTYRDDSIDICNPEVLPIVSELLEVKEEMLFEALVTRKTVTVGEKLILPYKLAEAVTVRNSMAKSLYSALFDWIVFRINHALLNSKDLEQDTKTLSIGVLDIFGFEDYENNSFEQFCINFANERLQHYFNQHIFKLEQEEYRTEGISWHNIDYIDNTCCINLISKKPTGLLHLLDEESNFPQATNQTLLDKFKHQHEENSYIEFPAVMEPAFIIKHYAGKVKYGVKDFREKNTDHMRPDIVALLRSSRNAFVSGMTGIDPVAVFRWAVLRAFFRAVVAFREAGKRHIQRKSGHDDTTPCAILKSMDSFSFLQHPVHQRSLEILQRCKEEKYSITRKNPRTPLSDLQGMNTLNEKNQHDTFDIAWNVRTGIRQSRLPASNTSLLDKDGIFAHSASSKLLERAHGILTRNKNFRSKPVLPKHLLEVNSLKHLTRLTLQDRITKSLLHLHKKKKPPSISAQFQASLSKLMETLGQAEPYFVKCIRSNAEKLPLRFSDALVLRQLRYTGMLETVRIRQSGYSSKYSFQDFVSHFHVLLPQHIIPSKFNIQDFFRKININSDNYQVGKTMVFLKEHERQHLQDLLHQEVLRRIVLLQRWFRVLLSRQQFLHLRQASIIIQRFWRNYLNQKQVRNAAVEKDAFIMASAASLLQASWRAHLERQRYLELRAAAVIIQQRWRELYRCRHKAATCIQSRWRGYRQRKKYKEQRNKIILLQSIYRGFRARQRCNALKEEKLREAKLEHGLVHVKACGPLEIQGSDPSEWEDRSFDNRVKAIEECKYVIESNRISRESSMDFSKESPDKQQERGRRQSGTDLQEDVIVRQRPKSLEDLHQKKVGRAKRESRRMRELEQAIFSLELLKVRSLGGMSPSEERRWSTELMPEGLQSPHGTPDSESSQGSLELLTCDENQKSKPESLILDEGELKISSPNTFTNPKSQDNALSASSETSSTLAGKGASSDSEHLKNGTAKEKLVCSSEPITCKPQLRDSFVSSSLPTFFYIPHQEALKTSSHLDTSIQRNKLPEREAILKTTLTQDINREARKCQFSGDQMTPLNTDSSCTVLKKLEKLNIEKEKRQKQLQQQNEKEMMEQIRQQTDILEKERKAFKTIEQSRTEASVLAPSFYQPRQKVERPCSLYIQNTPSKGEAGVLGSPSAVTKRDAALATKDSPSIHLPPKDRPVTLFFEKKGSPCQSRTVKELPKTERTGTQHDAAYKLSNNRSTERDHFKSTHFYSHRSDDPSREGSSRAIFFTPKDNITPLVHSGNPQAHKQDESAWKPKLAGPGQQETSQRFSSVDEQAKLHKAMSQGEITKLAVRQKASDLDIRPQRAKMRFWAKGKQGEKKTTRVKPASQSEISSFFPGPDVTPAHPFSDELTQYHPTPPLSPELPGSCRKEFKENKEPSPKAKRKRGVKISSVALDSMHWQNDSVQIIASASDLKSMDEFLLKKMNDLDNEDSKKDTLVDVVFKKALKEFRQNIFSSYSSALAMDDGKSIRYKDLYALFEQILEKTMRLEQRDWNESPVRVWVNTFKVFLDEYMNEFKTLDSTAPKVLKTERKKRRKKETDLVEEHNGHIFKATQYSIPTYCEYCSSLIWIMDRASVCKLCKYACHKKCCLKTTAKCSKKYDPELSSRQFGVELSRLTSEDRAVPLVVEKLINYIEMHGLYTEGIYRKSGSTNKIKELRQGLDTDAESVNLDDYNIHVIASVFKQWLRDLPNPLMTFELYEEFLRAMGLQERKETIRGVYSVIDQLSRTHLNTLERLIFHLVRIALQEDTNRMSANALAIVFAPCILRCPDTTDPLQSVQDISKTTTCVELIVVEQMNKYKARLKDISSLEFAENKAKTRLSLIRRSMGKGRIHRGNYPSPSSPVIVRLPSMSDVPEETLSSETAMETDLTDQQQAAMQQEEKVLTEQIENLQKEKEELTFEMLVLEPRASDDETLESEASIGTADSSENLNMDSEERSLALSSLKAAGKSEPSSKSRKQLRKQPDSLDSVSSSVSSCLSNTTSSHGTRKRFQIYSKSPFYRAASACEAQGTEGPLGQAKSLEDRPQFISRGTFNPEKGKQKLKNVKNSPQKTKETPEGTVTSGRKKTVDSDCSSTQQLPLFGNNEFMV.

The 99-residue stretch at 14 to 112 folds into the Ras-associating domain; that stretch reads NEHTLRIYPG…YRFLLREKNL (99 aa). Residues 146-1017 form the Myosin motor domain; it reads KDFDDLCSLP…ERQHLQDLLH (872 aa). The chain crosses the membrane as a helical span at residues 175–195; the sequence is IYTYVGSILIAINPFKFLPIY. 239–246 is a binding site for ATP; that stretch reads GESGSGKT. Serine 755 is subject to Phosphoserine. Residues 908 to 919 form an actin-binding region; it reads QAEPYFVKCIRS. IQ domains are found at residues 1021-1041, 1043-1072, 1075-1104, 1116-1145, and 1139-1168; these read LRRI…QQFL, LRQA…EKDA, MASA…AAVI, RHKA…KIIL, and QRNK…EKLR. Positions 1022–1163 are neck or regulatory domain; that stretch reads RRIVLLQRWF…RARQRCNALK (142 aa). Residues 1164-2505 form a tail region; it reads EEKLREAKLE…LKNVKNSPQK (1342 aa). Basic and acidic residues predominate over residues 1221 to 1240; the sequence is RESSMDFSKESPDKQQERGR. Residues 1221–1276 are disordered; that stretch reads RESSMDFSKESPDKQQERGRRQSGTDLQEDVIVRQRPKSLEDLHQKKVGRAKRESR. Serine 1243 is modified (phosphoserine). The residue at position 1245 (threonine 1245) is a Phosphothreonine. Position 1259 is a phosphoserine (serine 1259). The stretch at 1265 to 1292 forms a coiled coil; it reads QKKVGRAKRESRRMRELEQAIFSLELLK. Residues 1266 to 1276 show a composition bias toward basic residues; that stretch reads KKVGRAKRESR. Residues serine 1300 and serine 1318 each carry the phosphoserine modification. Positions 1342–1401 are disordered; sequence KSKPESLILDEGELKISSPNTFTNPKSQDNALSASSETSSTLAGKGASSDSEHLKNGTAK. Residues 1358–1371 show a composition bias toward polar residues; the sequence is SSPNTFTNPKSQDN. Over residues 1372 to 1384 the composition is skewed to low complexity; the sequence is ALSASSETSSTLA. The segment covering 1391 to 1401 has biased composition (basic and acidic residues); it reads DSEHLKNGTAK. Residues 1492–1539 adopt a coiled-coil conformation; the sequence is TVLKKLEKLNIEKEKRQKQLQQQNEKEMMEQIRQQTDILEKERKAFKT. Disordered stretches follow at residues 1650–1675, 1693–1727, 1767–1793, and 1806–1841; these read RSTE…REGS, SGNP…SVDE, GKQG…PGPD, and QYHP…KRGV. Residues 1665–1675 show a composition bias toward basic and acidic residues; the sequence is HRSDDPSREGS. Residues 1715–1726 are compositionally biased toward polar residues; it reads QQETSQRFSSVD. The segment covering 1821 to 1833 has biased composition (basic and acidic residues); it reads CRKEFKENKEPSP. Serine 1950 carries the phosphoserine modification. 2 consecutive Phorbol-ester/DAG-type zinc fingers follow at residues 2001–2050 and 2068–2119; these read GHIF…TAKC and SRLT…DTDA. A Rho-GAP domain is found at 2065 to 2253; sequence VELSRLTSED…LIVVEQMNKY (189 aa). Phosphoserine occurs at positions 2293 and 2296. The stretch at 2324 to 2360 forms a coiled coil; sequence TDQQQAAMQQEEKVLTEQIENLQKEKEELTFEMLVLE. Residues 2361–2443 form a disordered region; sequence PRASDDETLE…NTTSSHGTRK (83 aa). The span at 2377–2386 shows a compositional bias: polar residues; that stretch reads TADSSENLNM. The span at 2420–2438 shows a compositional bias: low complexity; that stretch reads SLDSVSSSVSSCLSNTTSS. Serine 2458 is subject to Phosphoserine. The tract at residues 2465–2530 is disordered; that stretch reads TEGPLGQAKS…TVDSDCSSTQ (66 aa).

This sequence belongs to the TRAFAC class myosin-kinesin ATPase superfamily. Myosin family. Post-translationally, phosphorylated by ALPK1 following monosodium urate monohydrate (MSU)-induced inflammation. Expressed in the eye, lung, liver, brain, heart, kidney, skeletal muscle and spleen. No detection was found in liver. In the brain, expressed in the ependymal cells of the third ventricle and the aqueduct.

Its subcellular location is the membrane. It localises to the cytoplasm. The protein localises to the synapse. The protein resides in the cell projection. It is found in the growth cone. Myosins are actin-based motor molecules with ATPase activity. Unconventional myosins serve in intracellular movements. Regulates Rho by stimulating it's GTPase activity in neurons. Required for the regulation of neurite branching and motor neuron axon guidance. The sequence is that of Unconventional myosin-IXa (Myo9a) from Mus musculus (Mouse).